The primary structure comprises 307 residues: Undecaprenyl-diphosphatase (307 aa).

6 consecutive transmembrane segments (helical) span residues 40-60 (AAKTLDIVIQLGAVLAVVVYF), 79-99 (LRLALALAFAFLPAAVVGLLF), 107-127 (LFGPGPVAAALIVGGFLMIGV), 183-203 (AAAAEFSFLLAIPTLGAATVF), 219-239 (IVALVVGLAVSFAVALLVIAV), and 249-269 (LAPFGWYRIALGALVLWLWIA).

This sequence belongs to the UppP family.

Its subcellular location is the cell inner membrane. The catalysed reaction is di-trans,octa-cis-undecaprenyl diphosphate + H2O = di-trans,octa-cis-undecaprenyl phosphate + phosphate + H(+). In terms of biological role, catalyzes the dephosphorylation of undecaprenyl diphosphate (UPP). Confers resistance to bacitracin. The chain is Undecaprenyl-diphosphatase from Sorangium cellulosum (strain So ce56) (Polyangium cellulosum (strain So ce56)).